The following is a 128-amino-acid chain: Flagellar basal body rod protein FlgB (128 aa).

Belongs to the flagella basal body rod proteins family. The basal body constitutes a major portion of the flagellar organelle and consists of a number of rings mounted on a central rod. In Gram-negative bacteria, at least four rings, L, P, S and M are present, whereas Gram-positive bacteria lack the L and P rings. The rod consists of about 26 subunits of FlgG in the distal portion, and FlgB, FlgC and FlgF build up the proximal portion of the rod with about 6 subunits each. Rod assembly occurs by export via the flagellum-specific pathway of its constituent proteins and by their incorporation into the rod structure in the probable order of FlgB, FlgC, FlgF and FlgG. Another protein, FliE, also assembles onto the stable rod structure.

Its subcellular location is the bacterial flagellum basal body. Functionally, structural component of flagellum, the bacterial motility apparatus. Part of the rod structure of flagellar basal body. This Cereibacter sphaeroides (strain ATCC 17023 / DSM 158 / JCM 6121 / CCUG 31486 / LMG 2827 / NBRC 12203 / NCIMB 8253 / ATH 2.4.1.) (Rhodobacter sphaeroides) protein is Flagellar basal body rod protein FlgB.